We begin with the raw amino-acid sequence, 1288 residues long: 5-oxoprolinase (1288 aa).

The tract at residues 1248-1270 is disordered; it reads PGGGGYGDPEDPAPPPGSPPLFP. A compositionally biased stretch (pro residues) spans 1259 to 1270; the sequence is PAPPPGSPPLFP. Phosphoserine is present on Ser-1265.

Belongs to the oxoprolinase family. Homodimer. As to expression, expressed in testis, kidney and liver.

It localises to the cytoplasm. The protein localises to the cytosol. It carries out the reaction 5-oxo-L-proline + ATP + 2 H2O = L-glutamate + ADP + phosphate + H(+). Its function is as follows. Catalyzes the cleavage of 5-oxo-L-proline to form L-glutamate coupled to the hydrolysis of ATP to ADP and inorganic phosphate. The chain is 5-oxoprolinase (Oplah) from Rattus norvegicus (Rat).